Reading from the N-terminus, the 258-residue chain is Tryptophan synthase alpha chain (258 aa).

Active-site proton acceptor residues include Glu-52 and Asp-63.

Belongs to the TrpA family. In terms of assembly, tetramer of two alpha and two beta chains.

The enzyme catalyses (1S,2R)-1-C-(indol-3-yl)glycerol 3-phosphate + L-serine = D-glyceraldehyde 3-phosphate + L-tryptophan + H2O. The protein operates within amino-acid biosynthesis; L-tryptophan biosynthesis; L-tryptophan from chorismate: step 5/5. Its function is as follows. The alpha subunit is responsible for the aldol cleavage of indoleglycerol phosphate to indole and glyceraldehyde 3-phosphate. The polypeptide is Tryptophan synthase alpha chain (Streptococcus pneumoniae serotype 19F (strain G54)).